The following is a 301-amino-acid chain: Recombination-associated protein RdgC (301 aa).

The protein belongs to the RdgC family.

It localises to the cytoplasm. It is found in the nucleoid. Its function is as follows. May be involved in recombination. This chain is Recombination-associated protein RdgC, found in Stenotrophomonas maltophilia (strain R551-3).